Reading from the N-terminus, the 170-residue chain is Lipoprotein signal peptidase (170 aa).

4 consecutive transmembrane segments (helical) span residues Leu-11 to Phe-31, Ile-41 to Ser-61, Trp-69 to Leu-89, and Asp-95 to Tyr-115. Catalysis depends on residues Asp-125 and Asp-144. Residues Tyr-136 to Leu-156 traverse the membrane as a helical segment.

Belongs to the peptidase A8 family.

It is found in the cell inner membrane. It catalyses the reaction Release of signal peptides from bacterial membrane prolipoproteins. Hydrolyzes -Xaa-Yaa-Zaa-|-(S,diacylglyceryl)Cys-, in which Xaa is hydrophobic (preferably Leu), and Yaa (Ala or Ser) and Zaa (Gly or Ala) have small, neutral side chains.. It functions in the pathway protein modification; lipoprotein biosynthesis (signal peptide cleavage). In terms of biological role, this protein specifically catalyzes the removal of signal peptides from prolipoproteins. This is Lipoprotein signal peptidase from Pseudomonas fluorescens.